Consider the following 150-residue polypeptide: UPF0756 membrane protein PM0771 (150 aa).

4 helical membrane passes run 12–34, 52–72, 79–99, and 123–143; these read LVVL…AAIL, HGIT…IVSG, LAVF…LVAW, and ILGV…AGIL.

It belongs to the UPF0756 family.

Its subcellular location is the cell membrane. This chain is UPF0756 membrane protein PM0771, found in Pasteurella multocida (strain Pm70).